An 821-amino-acid polypeptide reads, in one-letter code: High affinity potassium transporter (821 aa).

Residues 1 to 10 (MSDSQSNKQN) show a composition bias toward polar residues. Positions 1-47 (MSDSQSNKQNQGEDDNNVSSSIESNENYPFRLNDEESEPQSSTTESM) are disordered. Topologically, residues 1 to 57 (MSDSQSNKQNQGEDDNNVSSSIESNENYPFRLNDEESEPQSSTTESMLKAKKQSWRQ) are cytoplasmic. The span at 17–27 (NVSSSIESNEN) shows a compositional bias: low complexity. Residues 58–78 (VLMLGFSSLGAIYGDIGTSPL) traverse the membrane as a helical segment. The Extracellular portion of the chain corresponds to 79–101 (YVLNSIKYPNSSPTEEDIYGAIS). Residues 102–122 (IIFYLFTFIVIFKYILIVLFL) traverse the membrane as a helical segment. Topologically, residues 123–190 (GTNDGEGGQV…KASGFKTNPK (68 aa)) are cytoplasmic. Residues 191-211 (LIKFISKFILFGCFFGCSLVM) form a helical membrane-spanning segment. Residues 212 to 238 (SDGLLTPTTSVLSAIAGIQIANPSFND) are Extracellular-facing. A helical membrane pass occupies residues 239-259 (VLAVSEVVLIVLFLIQQFGSN). A topological domain (cytoplasmic) is located at residue Lys-260. Residues 261–281 (ISFTFAPIIFLWLIGLIISGI) traverse the membrane as a helical segment. The Extracellular portion of the chain corresponds to 282–306 (YNIVKFHPAVFKSLSPYYAIQLLKH). Residues 307-327 (SGIDVFSGAMLSITGTEAMFA) traverse the membrane as a helical segment. Over 328–340 (DVGHFGRLPIQLT) the chain is Cytoplasmic. The chain crosses the membrane as a helical span at residues 341–361 (LTLFVYPALIICYLGQGAYII). Residues 362–386 (KHPEALSNPFFYSIPGGLNSWIYWV) are Extracellular-facing. A helical membrane pass occupies residues 387-407 (MFVLATLSTIIASQALILGVF). Residues 408 to 434 (SITSQLINLDCFPNFKIIHVSKKYAGK) lie on the Cytoplasmic side of the membrane. A helical transmembrane segment spans residues 435 to 455 (VYIPAINWLLMIGVCATTAGF). Residues 456 to 463 (KNSNNVTA) lie on the Extracellular side of the membrane. Asn-460 is a glycosylation site (N-linked (GlcNAc...) asparagine). Residues 464–484 (AYGLGITLDFLVTSSLIMVCM) traverse the membrane as a helical segment. Topologically, residues 485-491 (TYVYNWN) are cytoplasmic. A helical membrane pass occupies residues 492 to 512 (ILIPITYALIFLPLEVIMVIS). Residues 513–516 (NLKK) lie on the Extracellular side of the membrane. The helical transmembrane segment at 517–537 (ITHGAWFPLMMSGIFMMFLSF) threads the bilayer. Over 538–821 (WRWARSRKVN…KMFLGGVVRI (284 aa)) the chain is Cytoplasmic.

This sequence belongs to the HAK/KUP transporter (TC 2.A.72) family.

It localises to the membrane. In terms of biological role, major high-affinity potassium uptake protein. The chain is High affinity potassium transporter (HAK1) from Schwanniomyces occidentalis (Yeast).